Consider the following 253-residue polypeptide: Sulfate transporter CysZ (253 aa).

The next 4 membrane-spanning stretches (helical) occupy residues 27–47 (FVLLPLSINIVLFCGLIYLAV), 71–91 (ILWPLFVALVLLMVFFTFTVV), 150–170 (LFILSFIPVANIIAAPLWLLF), and 211–231 (IVYVALLIPVVNLLMMPAAVA).

The protein belongs to the CysZ family.

Its subcellular location is the cell inner membrane. Its function is as follows. High affinity, high specificity proton-dependent sulfate transporter, which mediates sulfate uptake. Provides the sulfur source for the cysteine synthesis pathway. This Pseudomonas syringae pv. tomato (strain ATCC BAA-871 / DC3000) protein is Sulfate transporter CysZ.